The sequence spans 97 residues: Large ribosomal subunit protein bL28 (97 aa).

This sequence belongs to the bacterial ribosomal protein bL28 family.

The protein is Large ribosomal subunit protein bL28 of Rickettsia africae (strain ESF-5).